The sequence spans 205 residues: Phosphoenolpyruvate guanylyltransferase (205 aa).

Residues Thr138, Gly154, and Ser157 each contribute to the phosphoenolpyruvate site.

Belongs to the CofC family.

The catalysed reaction is phosphoenolpyruvate + GTP + H(+) = enolpyruvoyl-2-diphospho-5'-guanosine + diphosphate. It functions in the pathway cofactor biosynthesis; coenzyme F420 biosynthesis. In terms of biological role, guanylyltransferase that catalyzes the activation of phosphoenolpyruvate (PEP) as enolpyruvoyl-2-diphospho-5'-guanosine, via the condensation of PEP with GTP. It is involved in the biosynthesis of coenzyme F420, a hydride carrier cofactor. In Chloroflexus aurantiacus (strain ATCC 29364 / DSM 637 / Y-400-fl), this protein is Phosphoenolpyruvate guanylyltransferase.